We begin with the raw amino-acid sequence, 179 residues long: MNRLHTRYNKEIAPALKNQLGVKNVMQVPRLEKITLSVCLSEAVQNPKILNTVVDEITAITGQKAVITKAKKAISNFKLRAGIPLGVRVTLRREKMWSFMDRLNTLALPRVRDFRGLPNKGFDGRGNYNMGLKEQIVFPEINYDKVDKTRGMNITICTTAKNDTEGRALLEALGMPFRK.

This sequence belongs to the universal ribosomal protein uL5 family. In terms of assembly, part of the 50S ribosomal subunit; part of the 5S rRNA/L5/L18/L25 subcomplex. Contacts the 5S rRNA and the P site tRNA. Forms a bridge to the 30S subunit in the 70S ribosome.

Functionally, this is one of the proteins that bind and probably mediate the attachment of the 5S RNA into the large ribosomal subunit, where it forms part of the central protuberance. In the 70S ribosome it contacts protein S13 of the 30S subunit (bridge B1b), connecting the 2 subunits; this bridge is implicated in subunit movement. Contacts the P site tRNA; the 5S rRNA and some of its associated proteins might help stabilize positioning of ribosome-bound tRNAs. This Bdellovibrio bacteriovorus (strain ATCC 15356 / DSM 50701 / NCIMB 9529 / HD100) protein is Large ribosomal subunit protein uL5.